Consider the following 385-residue polypeptide: 1-deoxy-D-xylulose 5-phosphate reductoisomerase (385 aa).

NADPH contacts are provided by Thr10, Gly11, Ser12, Ile13, Gly36, Asn38, and Asn122. Lys123 is a 1-deoxy-D-xylulose 5-phosphate binding site. Glu124 lines the NADPH pocket. Asp148 contacts Mn(2+). Ser149, Glu150, Ser174, and His197 together coordinate 1-deoxy-D-xylulose 5-phosphate. Glu150 is a binding site for Mn(2+). Gly203 serves as a coordination point for NADPH. 1-deoxy-D-xylulose 5-phosphate-binding residues include Ser210, Asn215, Lys216, and Glu219. A Mn(2+)-binding site is contributed by Glu219.

Belongs to the DXR family. The cofactor is Mg(2+). Requires Mn(2+) as cofactor.

It carries out the reaction 2-C-methyl-D-erythritol 4-phosphate + NADP(+) = 1-deoxy-D-xylulose 5-phosphate + NADPH + H(+). It participates in isoprenoid biosynthesis; isopentenyl diphosphate biosynthesis via DXP pathway; isopentenyl diphosphate from 1-deoxy-D-xylulose 5-phosphate: step 1/6. Catalyzes the NADPH-dependent rearrangement and reduction of 1-deoxy-D-xylulose-5-phosphate (DXP) to 2-C-methyl-D-erythritol 4-phosphate (MEP). This chain is 1-deoxy-D-xylulose 5-phosphate reductoisomerase, found in Geobacter sp. (strain M21).